Consider the following 207-residue polypeptide: MKFDLTAACTLSATLLVSSGTVFATTANTANKSLTTIESHTPISYGNNSSSLWEKFNNNVALTWDAPNNELYLPVITWHNRHTYDKEKTDRYNERPWGFGYGKYRYDEDNDWHSLYAMAFMDSHNRLEPIVGYGFQKMWIPGDLEGFRMGIGFTLSVTARHDYYYVPIPLPLPLFSIEYDRLSFQGTYIPGTYNNGNVLFAWLRWQW.

The first 24 residues, 1-24 (MKFDLTAACTLSATLLVSSGTVFA), serve as a signal peptide directing secretion. Catalysis depends on residues His-79, Asp-122, and Ser-123.

This sequence belongs to the lipid A palmitoyltransferase family. As to quaternary structure, homodimer.

The protein localises to the cell outer membrane. The catalysed reaction is a lipid A + a 1,2-diacyl-sn-glycero-3-phosphocholine = a hepta-acyl lipid A + a 2-acyl-sn-glycero-3-phosphocholine. It carries out the reaction a lipid IVA + a 1,2-diacyl-sn-glycero-3-phosphocholine = a lipid IVB + a 2-acyl-sn-glycero-3-phosphocholine. It catalyses the reaction a lipid IIA + a 1,2-diacyl-sn-glycero-3-phosphocholine = a lipid IIB + a 2-acyl-sn-glycero-3-phosphocholine. Functionally, transfers a fatty acid residue from the sn-1 position of a phospholipid to the N-linked hydroxyfatty acid chain on the proximal unit of lipid A or its precursors. The polypeptide is Lipid A acyltransferase PagP (Photorhabdus laumondii subsp. laumondii (strain DSM 15139 / CIP 105565 / TT01) (Photorhabdus luminescens subsp. laumondii)).